The chain runs to 540 residues: Cobalt-factor III methyltransferase (540 aa).

Residues C402, C405, C439, and C443 each contribute to the [4Fe-4S] cluster site.

The protein in the N-terminal section; belongs to the precorrin methyltransferase family. [4Fe-4S] cluster is required as a cofactor.

It catalyses the reaction Co(II)-factor III + AH2 + S-adenosyl-L-methionine = Co-precorrin-4 + A + S-adenosyl-L-homocysteine. Its pathway is cofactor biosynthesis; adenosylcobalamin biosynthesis. Methyltransferase that catalyzes the reduction, ring contraction and methylation of C-17 in cobalt-factor III to form cobalt-precorrin-4. Is also able to convert cobalt-precorrin-3 to cobalt-precorrin-4. The polypeptide is Cobalt-factor III methyltransferase (cbiH60) (Priestia megaterium (Bacillus megaterium)).